A 601-amino-acid polypeptide reads, in one-letter code: Protein NRT1/ PTR FAMILY 4.4 (601 aa).

2 helical membrane-spanning segments follow: residues 44–64 (AALFVLGFQAFEMMAIAAVGN) and 82–102 (ANLVTNFIGTVFLLSLLGGFL). Thr112 carries the phosphothreonine modification. The next 10 membrane-spanning stretches (helical) occupy residues 113–133 (MLVFGVIEISGFILLSVQAHL), 160–180 (TLYTALCLVALGSGCLKPNII), 198–218 (FFNAAYFAFSMGQLIALTLLV), 228–248 (VGFGVSAAVMAAGMISLVAGT), 337–357 (ILLSVIPIFACTIIFNTILAQ), 386–406 (AIPYIILIFFVPLYETFFVPL), 420–440 (LQRIGTGLFLATFSMVAAALV), 453–473 (VMLSIFWIAPQFLIFGLSEMF), 493–513 (FLTAMTYCSYSFGFYLSSVLV), and 544–564 (HFYWLLASLSFINFFNYLFWS).

The protein belongs to the major facilitator superfamily. Proton-dependent oligopeptide transporter (POT/PTR) (TC 2.A.17) family. In terms of tissue distribution, expressed in shoots, roots and stems.

Its subcellular location is the membrane. The polypeptide is Protein NRT1/ PTR FAMILY 4.4 (NPF4.4) (Arabidopsis thaliana (Mouse-ear cress)).